A 281-amino-acid chain; its full sequence is AB hydrolase superfamily protein YclE (281 aa).

The 239-residue stretch at 30–268 folds into the AB hydrolase-1 domain; the sequence is SAVYYPRLFS…SGHQPMLEEP (239 aa). Ser95 serves as the catalytic Nucleophile. Asp232 is an active-site residue. His261 acts as the Proton donor in catalysis.

It belongs to the AB hydrolase superfamily.

The protein is AB hydrolase superfamily protein YclE (yclE) of Bacillus subtilis (strain 168).